We begin with the raw amino-acid sequence, 237 residues long: 2,3-bisphosphoglycerate-dependent phosphoglycerate mutase (237 aa).

Substrate-binding positions include 8–15 (RHGQSQWN), 21–22 (TG), arginine 60, 87–90 (ERHY), lysine 98, 114–115 (RR), and 180–181 (GN). Histidine 9 functions as the Tele-phosphohistidine intermediate in the catalytic mechanism. The active-site Proton donor/acceptor is glutamate 87.

It belongs to the phosphoglycerate mutase family. BPG-dependent PGAM subfamily. In terms of assembly, homodimer.

The enzyme catalyses (2R)-2-phosphoglycerate = (2R)-3-phosphoglycerate. The protein operates within carbohydrate degradation; glycolysis; pyruvate from D-glyceraldehyde 3-phosphate: step 3/5. Its function is as follows. Catalyzes the interconversion of 2-phosphoglycerate and 3-phosphoglycerate. The protein is 2,3-bisphosphoglycerate-dependent phosphoglycerate mutase of Caulobacter sp. (strain K31).